A 623-amino-acid polypeptide reads, in one-letter code: Chaperone protein DnaK (623 aa).

Position 175 is a phosphothreonine; by autocatalysis (Thr175). Residues 578 to 623 form a disordered region; it reads ANPEGAPGAGFDPNNMGGANAGNASAGNDKKDDNVVDADFKVEDDK. Residues 591–604 are compositionally biased toward low complexity; sequence NNMGGANAGNASAG. A compositionally biased stretch (basic and acidic residues) spans 605-623; the sequence is NDKKDDNVVDADFKVEDDK.

It belongs to the heat shock protein 70 family.

Its function is as follows. Acts as a chaperone. The chain is Chaperone protein DnaK from Clostridium botulinum (strain 657 / Type Ba4).